Reading from the N-terminus, the 367-residue chain is Peptide chain release factor 1 (367 aa).

Gln238 is subject to N5-methylglutamine.

This sequence belongs to the prokaryotic/mitochondrial release factor family. In terms of processing, methylated by PrmC. Methylation increases the termination efficiency of RF1.

The protein resides in the cytoplasm. Its function is as follows. Peptide chain release factor 1 directs the termination of translation in response to the peptide chain termination codons UAG and UAA. This is Peptide chain release factor 1 from Dictyoglomus thermophilum (strain ATCC 35947 / DSM 3960 / H-6-12).